Consider the following 66-residue polypeptide: Large ribosomal subunit protein bL33c (66 aa).

This sequence belongs to the bacterial ribosomal protein bL33 family.

Its subcellular location is the plastid. It is found in the chloroplast. This Lepidium virginicum (Virginia pepperweed) protein is Large ribosomal subunit protein bL33c.